The primary structure comprises 157 residues: MGKSDKIIPIAENKEAKAKYDILETYEAGIVLKGSEVKSLREKGTVSFKDSFVRIENGEAWLYNLYIAPYKHATIENHDPLRKRKLLLHKREIMRLYGKVQEKGYTIIPLKLYWKNNKVKVLIALAKGKKLYDRRRELKEKAMKRELEREFKGKIHL.

Belongs to the SmpB family.

It localises to the cytoplasm. Functionally, required for rescue of stalled ribosomes mediated by trans-translation. Binds to transfer-messenger RNA (tmRNA), required for stable association of tmRNA with ribosomes. tmRNA and SmpB together mimic tRNA shape, replacing the anticodon stem-loop with SmpB. tmRNA is encoded by the ssrA gene; the 2 termini fold to resemble tRNA(Ala) and it encodes a 'tag peptide', a short internal open reading frame. During trans-translation Ala-aminoacylated tmRNA acts like a tRNA, entering the A-site of stalled ribosomes, displacing the stalled mRNA. The ribosome then switches to translate the ORF on the tmRNA; the nascent peptide is terminated with the 'tag peptide' encoded by the tmRNA and targeted for degradation. The ribosome is freed to recommence translation, which seems to be the essential function of trans-translation. The chain is SsrA-binding protein from Aquifex aeolicus (strain VF5).